A 446-amino-acid polypeptide reads, in one-letter code: Ribosomal protein uS12 methylthiotransferase RimO (446 aa).

In terms of domain architecture, MTTase N-terminal spans 4-119 (YKVGMVSLGC…IDKVIKEFIE (116 aa)). [4Fe-4S] cluster-binding residues include cysteine 13, cysteine 48, cysteine 82, cysteine 157, cysteine 161, and cysteine 164. Residues 143–373 (TTQKESAYIR…MLSQEKISND (231 aa)) enclose the Radical SAM core domain. One can recognise a TRAM domain in the interval 376–442 (KLKVNKKYDI…DYDLIGVVED (67 aa)).

This sequence belongs to the methylthiotransferase family. RimO subfamily. [4Fe-4S] cluster is required as a cofactor.

It localises to the cytoplasm. The catalysed reaction is L-aspartate(89)-[ribosomal protein uS12]-hydrogen + (sulfur carrier)-SH + AH2 + 2 S-adenosyl-L-methionine = 3-methylsulfanyl-L-aspartate(89)-[ribosomal protein uS12]-hydrogen + (sulfur carrier)-H + 5'-deoxyadenosine + L-methionine + A + S-adenosyl-L-homocysteine + 2 H(+). In terms of biological role, catalyzes the methylthiolation of an aspartic acid residue of ribosomal protein uS12. The protein is Ribosomal protein uS12 methylthiotransferase RimO of Clostridium botulinum (strain Eklund 17B / Type B).